The following is a 100-amino-acid chain: MLGSPLREYELLVSLGSEFEPEAESRVRSLFTPVEPEGVTVKHLDVLGIRKFAYEIKGRNDGVCVVVRFLANAGSIAEIGRQMRLTEDVIRTKLLRVGRK.

It belongs to the bacterial ribosomal protein bS6 family.

Binds together with bS18 to 16S ribosomal RNA. The chain is Small ribosomal subunit protein bS6 from Tropheryma whipplei (strain Twist) (Whipple's bacillus).